A 337-amino-acid polypeptide reads, in one-letter code: Pseudouridine-5'-phosphate glycosidase (337 aa).

Glu-26 serves as the catalytic Proton donor. 2 residues coordinate substrate: Lys-87 and Val-107. Residue Asp-139 participates in Mn(2+) binding. 141-143 (SAD) serves as a coordination point for substrate. Lys-160 functions as the Nucleophile in the catalytic mechanism. The span at 306–325 (SSGPQAGAGAPGAEPGPARR) shows a compositional bias: low complexity. The segment at 306–337 (SSGPQAGAGAPGAEPGPARRTSPARAPSGEGW) is disordered.

This sequence belongs to the pseudouridine-5'-phosphate glycosidase family. In terms of assembly, homotrimer. The cofactor is Mn(2+).

It catalyses the reaction D-ribose 5-phosphate + uracil = psi-UMP + H2O. Functionally, catalyzes the reversible cleavage of pseudouridine 5'-phosphate (PsiMP) to ribose 5-phosphate and uracil. Functions biologically in the cleavage direction, as part of a pseudouridine degradation pathway. The chain is Pseudouridine-5'-phosphate glycosidase from Methylobacterium nodulans (strain LMG 21967 / CNCM I-2342 / ORS 2060).